The primary structure comprises 278 residues: Protoheme IX farnesyltransferase (278 aa).

9 helical membrane-spanning segments follow: residues 12–32 (VIWL…GTVD), 36–56 (LAAL…FNHY), 72–92 (PLPA…ALSA), 105–124 (LPGV…YTVW), 130–150 (WLNI…GYAL), 157–177 (LPAV…IWAL), 204–224 (AIIS…YLVF), 228–248 (LPGL…SALA), and 257–277 (MWRM…ALVF).

Belongs to the UbiA prenyltransferase family. Protoheme IX farnesyltransferase subfamily.

Its subcellular location is the cell membrane. It catalyses the reaction heme b + (2E,6E)-farnesyl diphosphate + H2O = Fe(II)-heme o + diphosphate. The protein operates within porphyrin-containing compound metabolism; heme O biosynthesis; heme O from protoheme: step 1/1. Converts heme B (protoheme IX) to heme O by substitution of the vinyl group on carbon 2 of heme B porphyrin ring with a hydroxyethyl farnesyl side group. This Pyrobaculum neutrophilum (strain DSM 2338 / JCM 9278 / NBRC 100436 / V24Sta) (Thermoproteus neutrophilus) protein is Protoheme IX farnesyltransferase.